Reading from the N-terminus, the 475-residue chain is Ribulose bisphosphate carboxylase large chain (475 aa).

The propeptide occupies 1 to 2; it reads MS. The residue at position 3 (P3) is an N-acetylproline. K14 bears the N6,N6,N6-trimethyllysine mark. 2 residues coordinate substrate: N123 and T173. The active-site Proton acceptor is the K175. Position 177 (K177) interacts with substrate. Residues K201, D203, and E204 each coordinate Mg(2+). An N6-carboxylysine modification is found at K201. Residue H294 is the Proton acceptor of the active site. Positions 295, 327, and 379 each coordinate substrate.

It belongs to the RuBisCO large chain family. Type I subfamily. Heterohexadecamer of 8 large chains and 8 small chains; disulfide-linked. The disulfide link is formed within the large subunit homodimers. The cofactor is Mg(2+). In terms of processing, the disulfide bond which can form in the large chain dimeric partners within the hexadecamer appears to be associated with oxidative stress and protein turnover.

The protein localises to the plastid. It localises to the chloroplast. The catalysed reaction is 2 (2R)-3-phosphoglycerate + 2 H(+) = D-ribulose 1,5-bisphosphate + CO2 + H2O. It catalyses the reaction D-ribulose 1,5-bisphosphate + O2 = 2-phosphoglycolate + (2R)-3-phosphoglycerate + 2 H(+). Its function is as follows. RuBisCO catalyzes two reactions: the carboxylation of D-ribulose 1,5-bisphosphate, the primary event in carbon dioxide fixation, as well as the oxidative fragmentation of the pentose substrate in the photorespiration process. Both reactions occur simultaneously and in competition at the same active site. This chain is Ribulose bisphosphate carboxylase large chain, found in Pinus radiata (Monterey pine).